The following is a 1181-amino-acid chain: Katanin p80 WD40 repeat-containing subunit B1 homolog KTN80.2 (1181 aa).

WD repeat units lie at residues 13–53, 56–95, 98–137, 140–181, 183–221, 224–264, and 266–303; these read AHSA…SLMS, GHTSAVDSVAFDSAEVLVLAGASSGVIKLWDVEEAKMVRA, GHRSNCSAVEFHPFGEFLASGSSDANLKIWDIRKKGCIQT, GHSR…HEFK, HEGPIRSLDFHPLEFLLATGSADRTVKFWDLETFELIGS, PEAT…DGVD, and GWSTLGDLCISEGKLLGCSYYQNSVGIWVSDISQIEPY. The DWD box motif lies at 114-130; it reads FLASGSSDANLKIWDIR. 5 disordered regions span residues 361–383, 503–597, 702–739, 754–869, and 988–1008; these read AHKSGSLSTPATSTGQAGDNKSL, KPPR…ESKS, TSMATDTPPVTSTRPDRTSATNLTSDVSGVTSKRQTRT, KMKS…VIST, and TKTQQSSDILTQKEEPQISGR. Composition is skewed to polar residues over residues 365–379 and 509–526; these read GSLSTPATSTGQAGD and RSPSTKYNEARWATSTDS. 2 stretches are compositionally biased toward basic and acidic residues: residues 530-553 and 569-585; these read DSKKNGLESSRDMDLPTGLRDDRG and RSERVLSPEKAGDELKS. Polar residues-rich tracts occupy residues 703–739, 754–791, 822–841, and 850–859; these read SMATDTPPVTSTRPDRTSATNLTSDVSGVTSKRQTRT, KMKSDEPSITSTWPDRTSATDLTSDVSGVISSRQTRTS, SATNLTSDESPVTSTRQAKT, and ILNQRQTTNM. The span at 998-1008 shows a compositional bias: basic and acidic residues; the sequence is TQKEEPQISGR.

The protein belongs to the WD repeat KATNB1 family. Component of KTN80-KTN1 complexes composed of a hexamer of KTN1-KTN80 heterodimers that sense microtubule (MT) geometry to confer precise MT severing. Interacts directly with AAA1/KTN1. Interacts with subunits of the CUL4-based E3 ligase complex DDB1A and DDB1B. As to expression, expressed at low levels in siliques, flowers, leaves, stems and roots.

The protein localises to the cytoplasm. It localises to the cytoskeleton. Its function is as follows. May participate in a complex which severs microtubules in an ATP-dependent manner. Microtubule severing may promote rapid reorganization of cellular microtubule arrays. Confers precision to microtubule (MT) severing by specific targeting of KTN1 to MT cleavage sites such as crossover or branching nucleation sites. Together with other KTN80s, regulates cell elongation by modulating MT organization. Negative regulator of abscisic acid (ABA) responses. May function as a substrate receptor for cullin-RING ubiquitin ligase 4 complexes (CRL4), a family of E3 ligases involved in protein degradation. The protein is Katanin p80 WD40 repeat-containing subunit B1 homolog KTN80.2 of Arabidopsis thaliana (Mouse-ear cress).